Reading from the N-terminus, the 432-residue chain is Probable rhamnogalacturonase E (432 aa).

The first 21 residues, 1 to 21, serve as a signal peptide directing secretion; sequence MQSKTFSVLSSCLLLIATVQG. Residues Cys-42 and Cys-68 are joined by a disulfide bond. Residues Asn-53, Asn-91, and Asn-106 are each glycosylated (N-linked (GlcNAc...) asparagine). The active-site Proton donor is the Asp-221. Cys-223 and Cys-240 are oxidised to a cystine. N-linked (GlcNAc...) asparagine glycans are attached at residues Asn-241 and Asn-256. The active site involves His-296. 2 cysteine pairs are disulfide-bonded: Cys-329-Cys-335 and Cys-357-Cys-366.

This sequence belongs to the glycosyl hydrolase 28 family.

The protein resides in the secreted. Functionally, pectinolytic enzymes consist of four classes of enzymes: pectine lyase, polygalacturonase, pectin methylesterase and rhamnogalacturonase. Hydrolyzes alpha-D-galacturonopyranosyl-(1,2)-alpha-L-rhamnopyranosyl linkages in the backbone of the hairy regions of pectins. The protein is Probable rhamnogalacturonase E (rhgE) of Aspergillus oryzae (strain ATCC 42149 / RIB 40) (Yellow koji mold).